Reading from the N-terminus, the 131-residue chain is ATP synthase lipid-binding protein, mitochondrial (131 aa).

A mitochondrion-targeting transit peptide spans 1 to 56; it reads MLSAARLIAPAARSAIFSNAAVVRPLAAVSTQTQLVPAAPAQLSAVRSFQTTSVTK. Residues 72-92 form a helical membrane-spanning segment; sequence VGVAGSGAGIGTVFGSLIIGY. Residue K99 is modified to N6,N6,N6-trimethyllysine. The chain crosses the membrane as a helical span at residues 107-127; that stretch reads ILGFALSEAMGLFCLMMAFLL.

The protein belongs to the ATPase C chain family. F-type ATPases have 2 components, CF(1) - the catalytic core - and CF(0) - the membrane proton channel. CF(1) has five subunits: alpha(3), beta(3), gamma(1), delta(1), epsilon(1). CF(0) has three main subunits: a, b and c. Trimethylated by ATPSCKMT at Lys-99. Methylation may be required for proper incorporation of the C subunit into the ATP synthase complex and mitochondrial respiration.

Its subcellular location is the mitochondrion membrane. In terms of biological role, mitochondrial membrane ATP synthase (F(1)F(0) ATP synthase or Complex V) produces ATP from ADP in the presence of a proton gradient across the membrane which is generated by electron transport complexes of the respiratory chain. F-type ATPases consist of two structural domains, F(1) - containing the extramembraneous catalytic core and F(0) - containing the membrane proton channel, linked together by a central stalk and a peripheral stalk. During catalysis, ATP synthesis in the catalytic domain of F(1) is coupled via a rotary mechanism of the central stalk subunits to proton translocation. Part of the complex F(0) domain. A homomeric c-ring of probably 10 subunits is part of the complex rotary element. The sequence is that of ATP synthase lipid-binding protein, mitochondrial from Manduca sexta (Tobacco hawkmoth).